The primary structure comprises 183 residues: Capsid protein (183 aa).

Positions 136–183 (NAPILSTLPETTVVRRRGRSPRRRTPSPRRRRSQSPRRRRSQSRESQC) are disordered. Residues 149 to 176 (VRRRGRSPRRRTPSPRRRRSQSPRRRRS) are compositionally biased toward basic residues. Phosphoserine; by host is present on residues Ser-155, Ser-162, and Ser-170. One copy of the 1; half-length repeat lies at 155–161 (SPRRRTP). A 3 X 8 AA repeats of S-P-R-R-R-[PR]-S-Q region spans residues 155–177 (SPRRRTPSPRRRRSQSPRRRRSQ). Positions 158–175 (RRTPSPRRRRSQSPRRRR) match the Bipartite nuclear localization signal motif. Repeat copies occupy residues 162 to 169 (SPRRRRSQ) and 170 to 177 (SPRRRRSQ). An RNA binding region spans residues 177–183 (QSRESQC).

Belongs to the orthohepadnavirus core antigen family. In terms of assembly, homodimerizes, then multimerizes. Interacts with cytosol exposed regions of viral L glycoprotein present in the reticulum-to-Golgi compartment. Interacts with human FLNB. Phosphorylated form interacts with host importin alpha; this interaction depends on the exposure of the NLS, which itself depends upon genome maturation and/or phosphorylation of the capsid protein. Interacts with host NUP153. Phosphorylated by host SRPK1, SRPK2, and maybe protein kinase C or GAPDH. Phosphorylation is critical for pregenomic RNA packaging. Protein kinase C phosphorylation is stimulated by HBx protein and may play a role in transport of the viral genome to the nucleus at the late step during the viral replication cycle.

It localises to the virion. The protein localises to the host cytoplasm. Functionally, self assembles to form an icosahedral capsid. Most capsids appear to be large particles with an icosahedral symmetry of T=4 and consist of 240 copies of capsid protein, though a fraction forms smaller T=3 particles consisting of 180 capsid proteins. Entering capsids are transported along microtubules to the nucleus. Phosphorylation of the capsid is thought to induce exposure of nuclear localization signal in the C-terminal portion of the capsid protein that allows binding to the nuclear pore complex via the importin (karyopherin-) alpha and beta. Capsids are imported in intact form through the nuclear pore into the nuclear basket, where it probably binds NUP153. Only capsids that contain the mature viral genome can release the viral DNA and capsid protein into the nucleoplasm. Immature capsids get stuck in the basket. Capsids encapsulate the pre-genomic RNA and the P protein. Pre-genomic RNA is reverse-transcribed into DNA while the capsid is still in the cytoplasm. The capsid can then either be directed to the nucleus, providing more genomes for transcription, or bud through the endoplasmic reticulum to provide new virions. This Hepatitis B virus genotype D subtype ayw (isolate France/Tiollais/1979) (HBV-D) protein is Capsid protein.